A 302-amino-acid polypeptide reads, in one-letter code: Recombination-associated protein RdgC (302 aa).

It belongs to the RdgC family.

The protein resides in the cytoplasm. It is found in the nucleoid. May be involved in recombination. The polypeptide is Recombination-associated protein RdgC (Xanthomonas campestris pv. campestris (strain 8004)).